Here is a 279-residue protein sequence, read N- to C-terminus: Digeranylgeranylglyceryl phosphate synthase (279 aa).

Helical transmembrane passes span 27–47 (LIAT…VALI), 90–110 (FVGG…IAII), 127–147 (VLGN…GGAF), 199–219 (TGIF…LPFG), 222–242 (WGLF…FGAF), and 259–279 (TSIL…AAVI).

Belongs to the UbiA prenyltransferase family. DGGGP synthase subfamily. Mg(2+) is required as a cofactor.

The protein resides in the cell membrane. The enzyme catalyses sn-3-O-(geranylgeranyl)glycerol 1-phosphate + (2E,6E,10E)-geranylgeranyl diphosphate = 2,3-bis-O-(geranylgeranyl)-sn-glycerol 1-phosphate + diphosphate. It participates in membrane lipid metabolism; glycerophospholipid metabolism. Its function is as follows. Prenyltransferase that catalyzes the transfer of the geranylgeranyl moiety of geranylgeranyl diphosphate (GGPP) to the C2 hydroxyl of (S)-3-O-geranylgeranylglyceryl phosphate (GGGP). This reaction is the second ether-bond-formation step in the biosynthesis of archaeal membrane lipids. This Methanoculleus marisnigri (strain ATCC 35101 / DSM 1498 / JR1) protein is Digeranylgeranylglyceryl phosphate synthase.